The primary structure comprises 294 residues: Large ribosomal subunit protein uL2c (294 aa).

A disordered region spans residues 224–249 (VMNPVDHPHGGGGEGKSPIGRSRPVT).

The protein belongs to the universal ribosomal protein uL2 family. As to quaternary structure, part of the 50S ribosomal subunit.

Its subcellular location is the plastid. It localises to the chloroplast. In Porphyra purpurea (Red seaweed), this protein is Large ribosomal subunit protein uL2c (rpl2).